Consider the following 60-residue polypeptide: uncharacterized protein (60 aa).

Residues 11 to 33 (VFTVGFITGGVTPVMVSFVWPAA) form a helical membrane-spanning segment. 2 N-linked (GlcNAc...) asparagine; by host glycosylation sites follow: asparagine 40 and asparagine 57.

The protein localises to the host membrane. This is an uncharacterized protein from African swine fever virus (strain Badajoz 1971 Vero-adapted) (Ba71V).